The following is a 295-amino-acid chain: Small ribosomal subunit protein uS2 (295 aa).

Residues 273 to 295 are disordered; that stretch reads WAASSAPAAETLADPAADPSVKW. A compositionally biased stretch (low complexity) spans 274–295; sequence AASSAPAAETLADPAADPSVKW.

This sequence belongs to the universal ribosomal protein uS2 family. As to quaternary structure, component of the small ribosomal subunit. Mature ribosomes consist of a small (40S) and a large (60S) subunit. The 40S subunit contains about 33 different proteins and 1 molecule of RNA (18S). The 60S subunit contains about 49 different proteins and 3 molecules of RNA (25S, 5.8S and 5S). Interacts with RPS21.

Its subcellular location is the cytoplasm. Required for the assembly and/or stability of the 40S ribosomal subunit. Required for the processing of the 20S rRNA-precursor to mature 18S rRNA in a late step of the maturation of 40S ribosomal subunits. The polypeptide is Small ribosomal subunit protein uS2 (Paracoccidioides lutzii (strain ATCC MYA-826 / Pb01) (Paracoccidioides brasiliensis)).